Here is a 161-residue protein sequence, read N- to C-terminus: Globin CTT-VIIB-8 (161 aa).

Positions 1-16 (MKFFAVLALCIVGAIA) are cleaved as a signal peptide. One can recognise a Globin domain in the interval 18-161 (PLTADEASLV…NTYAIVVPRL (144 aa)). His76 and His111 together coordinate heme b.

It belongs to the globin family. As to quaternary structure, homodimer.

The chain is Globin CTT-VIIB-8 (CTT-7B8) from Chironomus thummi thummi (Midge).